Reading from the N-terminus, the 502-residue chain is Maturase K (502 aa).

It belongs to the intron maturase 2 family. MatK subfamily.

The protein localises to the plastid. It is found in the chloroplast. Functionally, usually encoded in the trnK tRNA gene intron. Probably assists in splicing its own and other chloroplast group II introns. The polypeptide is Maturase K (Arabis blepharophylla (Coast rock-cress)).